The sequence spans 327 residues: Ventral anterior homeobox 1 (327 aa).

Over residues 1–34 (MFGKQDKMDVRCSTETEANRVSKNGHKEGKDSKG) the composition is skewed to basic and acidic residues. Residues 1–41 (MFGKQDKMDVRCSTETEANRVSKNGHKEGKDSKGAEGNIST) are disordered. The homeobox DNA-binding region spans 99-158 (PKRTRTSFTAEQLYRLEMEFQRCQYVVGRERTELARQLNLSETQVKVWFQNRRTKQKKDQ). Low complexity predominate over residues 230–245 (APAGGSPHPPSAGTAA). Residues 230-249 (APAGGSPHPPSAGTAAGPPP) are disordered.

This sequence belongs to the EMX homeobox family.

The protein resides in the nucleus. Its function is as follows. Transcription factor that plays a role in establishing dorsal-ventral polarity in the neural retina. The polypeptide is Ventral anterior homeobox 1 (VAX1) (Gallus gallus (Chicken)).